A 292-amino-acid polypeptide reads, in one-letter code: ATP synthase gamma chain (292 aa).

It belongs to the ATPase gamma chain family. As to quaternary structure, F-type ATPases have 2 components, CF(1) - the catalytic core - and CF(0) - the membrane proton channel. CF(1) has five subunits: alpha(3), beta(3), gamma(1), delta(1), epsilon(1). CF(0) has three main subunits: a, b and c.

It localises to the cell membrane. Functionally, produces ATP from ADP in the presence of a proton gradient across the membrane. The gamma chain is believed to be important in regulating ATPase activity and the flow of protons through the CF(0) complex. The protein is ATP synthase gamma chain of Streptococcus suis (strain 05ZYH33).